Reading from the N-terminus, the 436-residue chain is Magnesium transporter MRS2-4 (436 aa).

The tract at residues 1 to 56 (MGKGPLSFRRLSSIRHRKKGSAVKDDSAQTSTPSSPPPPLPIHAGGSAVGATGKAK) is disordered. Positions 12–21 (SSIRHRKKGS) are enriched in basic residues. Residues 44 to 53 (AGGSAVGATG) are compositionally biased toward low complexity. 2 helical membrane passes run 372-392 (LTLTIASFAIAAETLLASLFG) and 405-425 (VFGYFVWSVTALCIVLFMVTL). A Required for magnesium transport activity motif is present at residues 392 to 394 (GMN).

This sequence belongs to the CorA metal ion transporter (MIT) (TC 1.A.35.5) family. In terms of tissue distribution, expressed in the whole plant except roots.

The protein localises to the membrane. Functionally, magnesium transporter that may mediate the influx of magnesium. In Arabidopsis thaliana (Mouse-ear cress), this protein is Magnesium transporter MRS2-4 (MRS2-4).